We begin with the raw amino-acid sequence, 416 residues long: Serine hydroxymethyltransferase (416 aa).

Residues leucine 118 and 122–124 each bind (6S)-5,6,7,8-tetrahydrofolate; that span reads GHL. Lysine 226 carries the N6-(pyridoxal phosphate)lysine modification. (6S)-5,6,7,8-tetrahydrofolate is bound by residues glutamate 242 and 350 to 352; that span reads SPF.

It belongs to the SHMT family. In terms of assembly, homodimer. The cofactor is pyridoxal 5'-phosphate.

The protein localises to the cytoplasm. It catalyses the reaction (6R)-5,10-methylene-5,6,7,8-tetrahydrofolate + glycine + H2O = (6S)-5,6,7,8-tetrahydrofolate + L-serine. Its pathway is one-carbon metabolism; tetrahydrofolate interconversion. It participates in amino-acid biosynthesis; glycine biosynthesis; glycine from L-serine: step 1/1. Functionally, catalyzes the reversible interconversion of serine and glycine with tetrahydrofolate (THF) serving as the one-carbon carrier. This reaction serves as the major source of one-carbon groups required for the biosynthesis of purines, thymidylate, methionine, and other important biomolecules. Also exhibits THF-independent aldolase activity toward beta-hydroxyamino acids, producing glycine and aldehydes, via a retro-aldol mechanism. The sequence is that of Serine hydroxymethyltransferase from Helicobacter pylori (strain G27).